Reading from the N-terminus, the 410-residue chain is DNA replication and repair protein RecF (410 aa).

Glycine 30–threonine 37 contacts ATP.

Belongs to the RecF family.

The protein resides in the cytoplasm. In terms of biological role, the RecF protein is involved in DNA metabolism; it is required for DNA replication and normal SOS inducibility. RecF binds preferentially to single-stranded, linear DNA. It also seems to bind ATP. This is DNA replication and repair protein RecF from Rhodococcus jostii (strain RHA1).